Reading from the N-terminus, the 301-residue chain is Cell division protein kinase 2 homolog CRK1 (301 aa).

Residues 5-297 (YERQEKIGEG…AADALNHPYF (293 aa)) enclose the Protein kinase domain. ATP-binding positions include 11 to 19 (IGEGTYGVV) and lysine 34. Residue aspartate 127 is the Proton acceptor of the active site. A Phosphothreonine; by CAK modification is found at threonine 160.

The protein belongs to the protein kinase superfamily. CMGC Ser/Thr protein kinase family. CDC2/CDKX subfamily. As to quaternary structure, forms a stable but non-covalent complex with a regulatory subunit and with a cyclin.

It catalyses the reaction [DNA-directed RNA polymerase] + ATP = phospho-[DNA-directed RNA polymerase] + ADP + H(+). Phosphorylation at Thr-15 or Tyr-16 inactivates the enzyme, while phosphorylation at Thr-160 activates it. Functionally, may be involved in some stage-specific role in the promastigote cell cycle. This chain is Cell division protein kinase 2 homolog CRK1 (CRK1), found in Leishmania mexicana.